The following is a 362-amino-acid chain: N-acylethanolamine-hydrolyzing acid amidase (362 aa).

The first 33 residues, 1–33, serve as a signal peptide directing secretion; it reads MGTLATRAACHGAHLALALLLLLSLSGPWLSAV. N42 and N112 each carry an N-linked (GlcNAc...) asparagine glycan. C131 functions as the Nucleophile in the catalytic mechanism. 2 N-linked (GlcNAc...) asparagine glycosylation sites follow: N314 and N338.

This sequence belongs to the acid ceramidase family. Heterodimer of an alpha and a beta subunit, produced by autocatalytic cleavage. N-glycosylated. Tunicamycin treatment causes a reduction in specific activity against N-palmitoylethanolamine. Post-translationally, autoproteolytic cleavage at pH 4.5 gives rise to the alpha and beta subunit. Cleavage gives rise to a conformation change that activates the enzyme. The same catalytic Cys residue mediates the autoproteolytic cleavage and subsequent hydrolysis of lipid substrates.

It is found in the lysosome. Its subcellular location is the membrane. It catalyses the reaction N-hexadecanoylethanolamine + H2O = ethanolamine + hexadecanoate. The catalysed reaction is an N-(long-chain fatty acyl)ethanolamine + H2O = a long-chain fatty acid + ethanolamine. It carries out the reaction N-dodecanoylethanolamine + H2O = dodecanoate + ethanolamine. The enzyme catalyses N-tetradecanoylethanolamine + H2O = tetradecanoate + ethanolamine. It catalyses the reaction an N-acylsphing-4-enine + H2O = sphing-4-enine + a fatty acid. The catalysed reaction is N-hexadecanoylsphing-4-enine + H2O = sphing-4-enine + hexadecanoate. It carries out the reaction N-dodecanoylsphing-4-enine + H2O = dodecanoate + sphing-4-enine. It participates in lipid metabolism; fatty acid metabolism. In terms of biological role, degrades bioactive fatty acid amides to their corresponding acids, with the following preference: N-palmitoylethanolamine &gt; N-myristoylethanolamine &gt; N-stearoylethanolamine &gt; N-oleoylethanolamine &gt; N-linoleoylethanolamine &gt; N-arachidonoylethanolamine. The sequence is that of N-acylethanolamine-hydrolyzing acid amidase from Mus musculus (Mouse).